Reading from the N-terminus, the 437-residue chain is GTPase Obg (437 aa).

An Obg domain is found at 2-160 (SMFLDTAKIS…RQLELELKIL (159 aa)). Positions 161–338 (ADVGLVGFPS…LLEATAELLA (178 aa)) constitute an OBG-type G domain. GTP-binding positions include 167–174 (GFPSVGKS), 192–196 (FTTIV), 214–217 (DLPG), 284–287 (NKMD), and 319–321 (SSL). 2 residues coordinate Mg(2+): S174 and T194. In terms of domain architecture, OCT spans 359–437 (GFAKTEKDFE…IGKFEFEFVD (79 aa)).

It belongs to the TRAFAC class OBG-HflX-like GTPase superfamily. OBG GTPase family. Monomer. Mg(2+) serves as cofactor.

The protein resides in the cytoplasm. Functionally, an essential GTPase which binds GTP, GDP and possibly (p)ppGpp with moderate affinity, with high nucleotide exchange rates and a fairly low GTP hydrolysis rate. Plays a role in control of the cell cycle, stress response, ribosome biogenesis and in those bacteria that undergo differentiation, in morphogenesis control. This is GTPase Obg from Streptococcus pyogenes serotype M2 (strain MGAS10270).